The primary structure comprises 511 residues: V-type proton ATPase subunit B, brain isoform (511 aa).

An ATP-binding site is contributed by Arg400.

Belongs to the ATPase alpha/beta chains family. In terms of assembly, V-ATPase is a heteromultimeric enzyme made up of two complexes: the ATP-hydrolytic V1 complex and the proton translocation V0 complex. The V1 complex consists of three catalytic AB heterodimers that form a heterohexamer, three peripheral stalks each consisting of EG heterodimers, one central rotor including subunits D and F, and the regulatory subunits C and H. The proton translocation complex V0 consists of the proton transport subunit a, a ring of proteolipid subunits c9c'', rotary subunit d, subunits e and f, and the accessory subunits ATP6AP1/Ac45 and ATP6AP2/PRR. As to expression, expressed in brain (at protein level). Expressed in all tissues tested, but highest in brain and in adrenal medulla.

It is found in the apical cell membrane. The protein localises to the melanosome. The protein resides in the cytoplasm. Its subcellular location is the cytoplasmic vesicle. It localises to the clathrin-coated vesicle membrane. It is found in the secretory vesicle. The protein localises to the synaptic vesicle membrane. In terms of biological role, non-catalytic subunit of the V1 complex of vacuolar(H+)-ATPase (V-ATPase), a multisubunit enzyme composed of a peripheral complex (V1) that hydrolyzes ATP and a membrane integral complex (V0) that translocates protons. V-ATPase is responsible for acidifying and maintaining the pH of intracellular compartments and in some cell types, is targeted to the plasma membrane, where it is responsible for acidifying the extracellular environment. In renal intercalated cells, can partially compensate the lack of ATP6V1B1 and mediate secretion of protons (H+) into the urine under base-line conditions but not in conditions of acid load. The polypeptide is V-type proton ATPase subunit B, brain isoform (ATP6V1B2) (Bos taurus (Bovine)).